We begin with the raw amino-acid sequence, 417 residues long: Gamma-glutamyl phosphate reductase (417 aa).

This sequence belongs to the gamma-glutamyl phosphate reductase family.

It localises to the cytoplasm. It catalyses the reaction L-glutamate 5-semialdehyde + phosphate + NADP(+) = L-glutamyl 5-phosphate + NADPH + H(+). Its pathway is amino-acid biosynthesis; L-proline biosynthesis; L-glutamate 5-semialdehyde from L-glutamate: step 2/2. Catalyzes the NADPH-dependent reduction of L-glutamate 5-phosphate into L-glutamate 5-semialdehyde and phosphate. The product spontaneously undergoes cyclization to form 1-pyrroline-5-carboxylate. The protein is Gamma-glutamyl phosphate reductase of Cronobacter sakazakii (strain ATCC BAA-894) (Enterobacter sakazakii).